A 962-amino-acid chain; its full sequence is RNA-binding protein 15 (962 aa).

Basic and acidic residues-rich tracts occupy residues 1–10 (MRSAGREPLP), 34–52 (LRRD…ERSP), and 59–72 (RGGE…ERSK). The interval 1–167 (MRSAGREPLP…SAPGGGDGVE (167 aa)) is disordered. Residues 82 to 94 (GSSSGKTDSGGSR) show a composition bias toward low complexity. Residues 97-112 (LHLDKSSSRGGSREYE) show a composition bias toward basic and acidic residues. Residue serine 108 is modified to Phosphoserine. Positions 118–129 (SSSRLHSYSSPS) are enriched in low complexity. Residues 134–149 (SGGGESRSSSRGGGGE) are compositionally biased toward gly residues. The segment covering 150–159 (SRSSGAASSA) has biased composition (low complexity). Residues 169-251 (KTLKISELGS…RPLKIEAVYV (83 aa)) form the RRM 1 domain. A phosphoserine mark is found at serine 178, serine 207, and serine 209. Lysine 245 participates in a covalent cross-link: Glycyl lysine isopeptide (Lys-Gly) (interchain with G-Cter in SUMO2). Phosphoserine is present on residues serine 252, serine 256, and serine 258. A disordered region spans residues 257-297 (RSPLDKDAYAPSSSVVGTSVGSHRHAPGGGGGQRSLSPGGA). The residue at position 265 (tyrosine 265) is a Phosphotyrosine. The span at 268–277 (SSSVVGTSVG) shows a compositional bias: low complexity. 3 positions are modified to phosphoserine: serine 291, serine 293, and serine 364. RRM domains are found at residues 373–450 (RTLF…YGKA) and 454–528 (TRLW…FADT). Glycyl lysine isopeptide (Lys-Gly) (interchain with G-Cter in SUMO2) cross-links involve residues lysine 405, lysine 419, and lysine 444. Lysine 449 carries the post-translational modification N6-acetyllysine. Basic and acidic residues-rich tracts occupy residues 553–580 (GHRA…RDLY) and 612–661 (SLDR…SERP). The interval 553-779 (GHRAPDPLRS…KQDGGTAPVA (227 aa)) is disordered. Threonine 567 carries the post-translational modification Phosphothreonine. Arginine 577 is modified (asymmetric dimethylarginine; alternate; by PRMT1). Omega-N-methylarginine; alternate; by PRMT1 is present on arginine 577. 5 positions are modified to phosphoserine: serine 621, serine 655, serine 670, serine 674, and serine 701. Composition is skewed to basic and acidic residues over residues 673-692 (RSPE…DRSS), 701-729 (SPVR…AERD), and 742-751 (NPLKKEDRSD). Residue lysine 745 forms a Glycyl lysine isopeptide (Lys-Gly) (interchain with G-Cter in SUMO2) linkage. Residues 754 to 771 (APSASTSSSKQKPPSQKQ) show a composition bias toward low complexity. 2 positions are modified to phosphoserine: serine 768 and serine 782. The 180-residue stretch at 778-957 (VAASSPKLCL…YLVMIIVRAK (180 aa)) folds into the SPOC domain. Residues 866–885 (GSSDSRSSSSSATSDTAAST) are disordered. The span at 867 to 885 (SSDSRSSSSSATSDTAAST) shows a compositional bias: low complexity. Serine 936 is subject to Phosphoserine.

The protein belongs to the RRM Spen family. In terms of assembly, component of the WMM complex, a N6-methyltransferase complex composed of a catalytic subcomplex, named MAC, and of an associated subcomplex, named MACOM. The MAC subcomplex is composed of METTL3 and METTL14. The MACOM subcomplex is composed of WTAP, ZC3H13, CBLL1/HAKAI, VIRMA, and, in some cases of RBM15 (RBM15 or RBM15B). Also a component of a MACOM-like complex, named WTAP complex, composed of WTAP, ZC3H13, CBLL1, VIRMA, RBM15, BCLAF1 and THRAP3. Interacts with RBPJ. Interacts (via SPOC domain) with SETD1B. Interacts with NXF1, the interaction is required to promote mRNA export. Interacts with SF3B1. Methylated at Arg-577 by PRMT1, leading to promote ubiquitination by CNOT4 and subsequent degradation by the proteasome. Post-translationally, ubiquitinated by CNOT4 following methylation at Arg-577 by PRMT1.

Its subcellular location is the nucleus speckle. The protein localises to the nucleus. It is found in the nucleoplasm. It localises to the nucleus envelope. The protein resides in the nucleus membrane. In terms of biological role, RNA-binding protein that acts as a key regulator of N6-methyladenosine (m6A) methylation of RNAs, thereby regulating different processes, such as hematopoietic cell homeostasis, alternative splicing of mRNAs and X chromosome inactivation mediated by Xist RNA. Associated component of the WMM complex, a complex that mediates N6-methyladenosine (m6A) methylation of RNAs, a modification that plays a role in the efficiency of mRNA splicing and RNA processing. Plays a key role in m6A methylation, possibly by binding target RNAs and recruiting the WMM complex. Involved in random X inactivation mediated by Xist RNA: acts by binding Xist RNA and recruiting the WMM complex, which mediates m6A methylation, leading to target YTHDC1 reader on Xist RNA and promoting transcription repression activity of Xist. Required for the development of multiple tissues, such as the maintenance of the homeostasis of long-term hematopoietic stem cells and for megakaryocyte (MK) and B-cell differentiation. Regulates megakaryocyte differentiation by regulating alternative splicing of genes important for megakaryocyte differentiation; probably regulates alternative splicing via m6A regulation. Required for placental vascular branching morphogenesis and embryonic development of the heart and spleen. Acts as a regulator of thrombopoietin response in hematopoietic stem cells by regulating alternative splicing of MPL. May also function as an mRNA export factor, stimulating export and expression of RTE-containing mRNAs which are present in many retrotransposons that require to be exported prior to splicing. High affinity binding of pre-mRNA to RBM15 may allow targeting of the mRNP to the export helicase DBP5 in a manner that is independent of splicing-mediated NXF1 deposition, resulting in export prior to splicing. May be implicated in HOX gene regulation. The chain is RNA-binding protein 15 from Mus musculus (Mouse).